A 383-amino-acid polypeptide reads, in one-letter code: Chorismate synthase (383 aa).

NADP(+) is bound by residues Arg-39 and Arg-45. Residues 128–130 (RAS), Gly-291, 306–310 (KPIAT), and Arg-332 each bind FMN.

The protein belongs to the chorismate synthase family. In terms of assembly, homotetramer. FMNH2 is required as a cofactor.

The enzyme catalyses 5-O-(1-carboxyvinyl)-3-phosphoshikimate = chorismate + phosphate. It functions in the pathway metabolic intermediate biosynthesis; chorismate biosynthesis; chorismate from D-erythrose 4-phosphate and phosphoenolpyruvate: step 7/7. Functionally, catalyzes the anti-1,4-elimination of the C-3 phosphate and the C-6 proR hydrogen from 5-enolpyruvylshikimate-3-phosphate (EPSP) to yield chorismate, which is the branch point compound that serves as the starting substrate for the three terminal pathways of aromatic amino acid biosynthesis. This reaction introduces a second double bond into the aromatic ring system. The sequence is that of Chorismate synthase from Thermus thermophilus (strain ATCC 27634 / DSM 579 / HB8).